The primary structure comprises 1435 residues: Gag-Pol polyprotein (1435 aa).

The N-myristoyl glycine; by host moiety is linked to residue Gly2. The tract at residues 7 to 31 is interaction with Gp41; it reads VLSGGKLDAWEKIRLRPGGKKKYRL. Residues 8–43 form an interaction with host CALM1 region; sequence LSGGKLDAWEKIRLRPGGKKKYRLKHLVWASRELER. The interaction with host AP3D1 stretch occupies residues 12–19; the sequence is KLDAWEKI. Residues 14-33 form an interaction with membrane phosphatidylinositol 4,5-bisphosphate and RNA region; that stretch reads DAWEKIRLRPGGKKKYRLKH. The Nuclear export signal motif lies at 16-22; it reads WEKIRLR. The Nuclear localization signal signature appears at 26 to 32; that stretch reads KKKYRLK. The interval 73–77 is interaction with membrane phosphatidylinositol 4,5-bisphosphate; sequence EELKS. Residues 108-127 are disordered; sequence QNKSQQKTQQAAADKEKDNK. Positions 109–118 are enriched in polar residues; the sequence is NKSQQKTQQA. Tyr132 bears the Phosphotyrosine; by host mark. The segment at 189-227 is interaction with human PPIA/CYPA and NUP153; that stretch reads NTVGGHQAAMQMLKDTINEEAAEWDRVHPVHAGPIPPGQ. A dimerization/Multimerization of capsid protein p24 region spans residues 277–363; the sequence is YSPVSILDIK…GGPSHKARVL (87 aa). CCHC-type zinc fingers lie at residues 391–408 and 412–429; these read VKCF…NCRA and KGCW…DCTE. The disordered stretch occupies residues 445-482; sequence EARKFSPEQARTNSPTSRELRVRRGDDPLSEAGAAEGQ. Basic and acidic residues predominate over residues 462–471; it reads RELRVRRGDD. A dimerization of protease region spans residues 489-493; sequence PQITL. The Peptidase A2 domain occupies 508–577; it reads REALLDTGAD…TPVNIIGRNI (70 aa). Residue Asp513 is the For protease activity; shared with dimeric partner of the active site. Dimerization of protease stretches follow at residues 537-543 and 576-588; these read GIGGFIK and NILT…LNFP. The region spanning 631 to 821 is the Reverse transcriptase domain; sequence EGKISRIGPE…PPFLWMGYEL (191 aa). The Mg(2+) site is built by Asp697, Asp772, and Asp773. Residues 814-822 are RT 'primer grip'; the sequence is FLWMGYELH. Residues 985 to 1001 carry the Tryptophan repeat motif motif; that stretch reads WETWWTEYWQATWIPEW. Positions 1021–1144 constitute an RNase H type-1 domain; the sequence is IAGAETYYID…VDKLVSSGVR (124 aa). Mg(2+)-binding residues include Asp1030, Glu1065, Asp1085, and Asp1136. The segment at 1150–1191 adopts an Integrase-type zinc-finger fold; the sequence is DGIDKAQEEHERYHNNWRAVASDFNLPPIVAKEIVASCDKCQ. Zn(2+) is bound by residues His1159, His1163, Cys1187, and Cys1190. Residues 1201–1351 form the Integrase catalytic domain; the sequence is VDCSPGIWQL…SAGERIIDII (151 aa). 3 residues coordinate Mg(2+): Asp1211, Asp1263, and Glu1299. The segment at residues 1370-1417 is a DNA-binding region (integrase-type); the sequence is FRVYYRDSRDPIWKGPAKLLWKGEGAVVIQDNSEIKVVPRREAKIIRD.

In terms of assembly, homotrimer; further assembles as hexamers of trimers. Interacts with gp41 (via C-terminus). Interacts with host CALM1; this interaction induces a conformational change in the Matrix protein, triggering exposure of the myristate group. Interacts with host AP3D1; this interaction allows the polyprotein trafficking to multivesicular bodies during virus assembly. Part of the pre-integration complex (PIC) which is composed of viral genome, matrix protein, Vpr and integrase. Homodimer; the homodimer further multimerizes as homohexamers or homopentamers. Interacts with human PPIA/CYPA; This interaction stabilizes the capsid. Interacts with human NUP153. Interacts with host PDZD8; this interaction stabilizes the capsid. Interacts with monkey TRIM5; this interaction destabilizes the capsid. As to quaternary structure, homodimer, whose active site consists of two apposed aspartic acid residues. In terms of assembly, heterodimer of p66 RT and p51 RT (RT p66/p51). Heterodimerization of RT is essential for DNA polymerase activity. The overall folding of the subdomains is similar in p66 RT and p51 RT but the spatial arrangements of the subdomains are dramatically different. Homodimer; possibly can form homotetramer. Part of the pre-integration complex (PIC) which is composed of viral genome, matrix protein, Vpr and integrase. Interacts with human SMARCB1/INI1 and human PSIP1/LEDGF isoform 1. Interacts with human KPNA3; this interaction might play a role in nuclear import of the pre-integration complex. Interacts with human NUP153; this interaction might play a role in nuclear import of the pre-integration complex. Requires Mg(2+) as cofactor. Specific enzymatic cleavages by the viral protease yield mature proteins. The protease is released by autocatalytic cleavage. The polyprotein is cleaved during and after budding, this process is termed maturation. Proteolytic cleavage of p66 RT removes the RNase H domain to yield the p51 RT subunit. Nucleocapsid protein p7 might be further cleaved after virus entry. Post-translationally, tyrosine phosphorylated presumably in the virion by a host kinase. Phosphorylation is apparently not a major regulator of membrane association. In terms of processing, phosphorylated possibly by host MAPK1; this phosphorylation is necessary for Pin1-mediated virion uncoating. Methylated by host PRMT6, impairing its function by reducing RNA annealing and the initiation of reverse transcription.

The protein resides in the host cell membrane. Its subcellular location is the host endosome. It is found in the host multivesicular body. The protein localises to the virion membrane. It localises to the host nucleus. The protein resides in the host cytoplasm. Its subcellular location is the virion. It carries out the reaction Specific for a P1 residue that is hydrophobic, and P1' variable, but often Pro.. The catalysed reaction is Endohydrolysis of RNA in RNA/DNA hybrids. Three different cleavage modes: 1. sequence-specific internal cleavage of RNA. Human immunodeficiency virus type 1 and Moloney murine leukemia virus enzymes prefer to cleave the RNA strand one nucleotide away from the RNA-DNA junction. 2. RNA 5'-end directed cleavage 13-19 nucleotides from the RNA end. 3. DNA 3'-end directed cleavage 15-20 nucleotides away from the primer terminus.. The enzyme catalyses 3'-end directed exonucleolytic cleavage of viral RNA-DNA hybrid.. It catalyses the reaction DNA(n) + a 2'-deoxyribonucleoside 5'-triphosphate = DNA(n+1) + diphosphate. With respect to regulation, protease: The viral protease is inhibited by many synthetic protease inhibitors (PIs), such as amprenavir, atazanavir, indinavir, loprinavir, nelfinavir, ritonavir and saquinavir. Use of protease inhibitors in tritherapy regimens permit more ambitious therapeutic strategies. Reverse transcriptase/ribonuclease H: RT can be inhibited either by nucleoside RT inhibitors (NRTIs) or by non nucleoside RT inhibitors (NNRTIs). NRTIs act as chain terminators, whereas NNRTIs inhibit DNA polymerization by binding a small hydrophobic pocket near the RT active site and inducing an allosteric change in this region. Classical NRTIs are abacavir, adefovir (PMEA), didanosine (ddI), lamivudine (3TC), stavudine (d4T), tenofovir (PMPA), zalcitabine (ddC), and zidovudine (AZT). Classical NNRTIs are atevirdine (BHAP U-87201E), delavirdine, efavirenz (DMP-266), emivirine (I-EBU), and nevirapine (BI-RG-587). The tritherapies used as a basic effective treatment of AIDS associate two NRTIs and one NNRTI. Mediates, with Gag polyprotein, the essential events in virion assembly, including binding the plasma membrane, making the protein-protein interactions necessary to create spherical particles, recruiting the viral Env proteins, and packaging the genomic RNA via direct interactions with the RNA packaging sequence (Psi). Gag-Pol polyprotein may regulate its own translation, by the binding genomic RNA in the 5'-UTR. At low concentration, the polyprotein would promote translation, whereas at high concentration, the polyprotein would encapsidate genomic RNA and then shut off translation. Functionally, targets the polyprotein to the plasma membrane via a multipartite membrane-binding signal, that includes its myristoylated N-terminus. Matrix protein is part of the pre-integration complex. Implicated in the release from host cell mediated by Vpu. Binds to RNA. Its function is as follows. Forms the conical core that encapsulates the genomic RNA-nucleocapsid complex in the virion. Most core are conical, with only 7% tubular. The core is constituted by capsid protein hexamer subunits. The core is disassembled soon after virion entry. Host restriction factors such as TRIM5-alpha or TRIMCyp bind retroviral capsids and cause premature capsid disassembly, leading to blocks in reverse transcription. Capsid restriction by TRIM5 is one of the factors which restricts HIV-1 to the human species. Host PIN1 apparently facilitates the virion uncoating. On the other hand, interactions with PDZD8 or CYPA stabilize the capsid. In terms of biological role, encapsulates and protects viral dimeric unspliced genomic RNA (gRNA). Binds these RNAs through its zinc fingers. Acts as a nucleic acid chaperone which is involved in rearangement of nucleic acid secondary structure during gRNA retrotranscription. Also facilitates template switch leading to recombination. As part of the polyprotein, participates in gRNA dimerization, packaging, tRNA incorporation and virion assembly. Aspartyl protease that mediates proteolytic cleavages of Gag and Gag-Pol polyproteins during or shortly after the release of the virion from the plasma membrane. Cleavages take place as an ordered, step-wise cascade to yield mature proteins. This process is called maturation. Displays maximal activity during the budding process just prior to particle release from the cell. Also cleaves Nef and Vif, probably concomitantly with viral structural proteins on maturation of virus particles. Hydrolyzes host EIF4GI and PABP1 in order to shut off the capped cellular mRNA translation. The resulting inhibition of cellular protein synthesis serves to ensure maximal viral gene expression and to evade host immune response. Also mediates cleavage of host YTHDF3. Mediates cleavage of host CARD8, thereby activating the CARD8 inflammasome, leading to the clearance of latent HIV-1 in patient CD4(+) T-cells after viral reactivation; in contrast, HIV-1 can evade CARD8-sensing when its protease remains inactive in infected cells prior to viral budding. Functionally, multifunctional enzyme that converts the viral RNA genome into dsDNA in the cytoplasm, shortly after virus entry into the cell. This enzyme displays a DNA polymerase activity that can copy either DNA or RNA templates, and a ribonuclease H (RNase H) activity that cleaves the RNA strand of RNA-DNA heteroduplexes in a partially processive 3' to 5' endonucleasic mode. Conversion of viral genomic RNA into dsDNA requires many steps. A tRNA(3)-Lys binds to the primer-binding site (PBS) situated at the 5'-end of the viral RNA. RT uses the 3' end of the tRNA primer to perform a short round of RNA-dependent minus-strand DNA synthesis. The reading proceeds through the U5 region and ends after the repeated (R) region which is present at both ends of viral RNA. The portion of the RNA-DNA heteroduplex is digested by the RNase H, resulting in a ssDNA product attached to the tRNA primer. This ssDNA/tRNA hybridizes with the identical R region situated at the 3' end of viral RNA. This template exchange, known as minus-strand DNA strong stop transfer, can be either intra- or intermolecular. RT uses the 3' end of this newly synthesized short ssDNA to perform the RNA-dependent minus-strand DNA synthesis of the whole template. RNase H digests the RNA template except for two polypurine tracts (PPTs) situated at the 5'-end and near the center of the genome. It is not clear if both polymerase and RNase H activities are simultaneous. RNase H probably can proceed both in a polymerase-dependent (RNA cut into small fragments by the same RT performing DNA synthesis) and a polymerase-independent mode (cleavage of remaining RNA fragments by free RTs). Secondly, RT performs DNA-directed plus-strand DNA synthesis using the PPTs that have not been removed by RNase H as primers. PPTs and tRNA primers are then removed by RNase H. The 3' and 5' ssDNA PBS regions hybridize to form a circular dsDNA intermediate. Strand displacement synthesis by RT to the PBS and PPT ends produces a blunt ended, linear dsDNA copy of the viral genome that includes long terminal repeats (LTRs) at both ends. Its function is as follows. Catalyzes viral DNA integration into the host chromosome, by performing a series of DNA cutting and joining reactions. This enzyme activity takes place after virion entry into a cell and reverse transcription of the RNA genome in dsDNA. The first step in the integration process is 3' processing. This step requires a complex comprising the viral genome, matrix protein, Vpr and integrase. This complex is called the pre-integration complex (PIC). The integrase protein removes 2 nucleotides from each 3' end of the viral DNA, leaving recessed CA OH's at the 3' ends. In the second step, the PIC enters cell nucleus. This process is mediated through integrase and Vpr proteins, and allows the virus to infect a non dividing cell. This ability to enter the nucleus is specific of lentiviruses, other retroviruses cannot and rely on cell division to access cell chromosomes. In the third step, termed strand transfer, the integrase protein joins the previously processed 3' ends to the 5' ends of strands of target cellular DNA at the site of integration. The 5'-ends are produced by integrase-catalyzed staggered cuts, 5 bp apart. A Y-shaped, gapped, recombination intermediate results, with the 5'-ends of the viral DNA strands and the 3' ends of target DNA strands remaining unjoined, flanking a gap of 5 bp. The last step is viral DNA integration into host chromosome. This involves host DNA repair synthesis in which the 5 bp gaps between the unjoined strands are filled in and then ligated. Since this process occurs at both cuts flanking the HIV genome, a 5 bp duplication of host DNA is produced at the ends of HIV-1 integration. Alternatively, Integrase may catalyze the excision of viral DNA just after strand transfer, this is termed disintegration. The sequence is that of Gag-Pol polyprotein (gag-pol) from Homo sapiens (Human).